The sequence spans 359 residues: Malonyl-CoA reductase (359 aa).

Thr16–Val19 serves as a coordination point for NADP(+). Cys153 acts as the Acyl-thioester intermediate in catalysis. Ser183–Gly184 contributes to the NADP(+) binding site. Residue His248 is the Proton acceptor of the active site. Residue Asn335–Thr336 coordinates NADP(+).

It belongs to the aspartate-semialdehyde dehydrogenase family. In terms of assembly, homodimer and possibly a tetramer. Mg(2+) is required as a cofactor. Requires Mn(2+) as cofactor.

It catalyses the reaction 3-oxopropanoate + NADP(+) + CoA = malonyl-CoA + NADPH + H(+). With respect to regulation, activated by dithioerythritol (5 mM) and inhibited by the thiol-blocking agent iodoacetamide (0.1 mM). Its function is as follows. Catalyzes the reduction of malonyl-CoA to malonate semialdehyde, a key step in the 3-hydroxypropanoate and the 3-hydroxypropanoate/4-hydroxybutyrate cycles. Can also use succinyl-CoA and succinate semialdehyde as substrates but at a lower rate than malonyl-CoA. This Sulfurisphaera tokodaii (strain DSM 16993 / JCM 10545 / NBRC 100140 / 7) (Sulfolobus tokodaii) protein is Malonyl-CoA reductase (mcr).